A 330-amino-acid polypeptide reads, in one-letter code: Probable integrase/recombinase protein MJ0367 (330 aa).

Positions 22–112 (IEETDKIKEY…LLKVFYRVLR (91 aa)) constitute a Core-binding (CB) domain. A Tyr recombinase domain is found at 136 to 325 (QHYDAVDAEM…RAESLEFIKK (190 aa)). Residues arginine 177, lysine 202, histidine 275, arginine 278, and histidine 301 contribute to the active site. Catalysis depends on tyrosine 310, which acts as the O-(3'-phospho-DNA)-tyrosine intermediate.

It belongs to the 'phage' integrase family.

In Methanocaldococcus jannaschii (strain ATCC 43067 / DSM 2661 / JAL-1 / JCM 10045 / NBRC 100440) (Methanococcus jannaschii), this protein is Probable integrase/recombinase protein MJ0367.